The following is a 184-amino-acid chain: Large ribosomal subunit protein bL17 (184 aa).

Residues 126-184 (TRAARAAASKQTADEAQVEETPAEEVTEETAAEETTEAAQADEAPAEEAPVEEKKDEEK) form a disordered region. Over residues 141–161 (AQVEETPAEEVTEETAAEETT) the composition is skewed to acidic residues.

The protein belongs to the bacterial ribosomal protein bL17 family. Part of the 50S ribosomal subunit. Contacts protein L32.

This Corynebacterium efficiens (strain DSM 44549 / YS-314 / AJ 12310 / JCM 11189 / NBRC 100395) protein is Large ribosomal subunit protein bL17.